A 206-amino-acid polypeptide reads, in one-letter code: Large ribosomal subunit protein uL3 (206 aa).

The tract at residues 126-155 is disordered; it reads HGHAGGPGAHGSRFHRHPGSMGANSTPSRV.

It belongs to the universal ribosomal protein uL3 family. Part of the 50S ribosomal subunit. Forms a cluster with proteins L14 and L19.

Its function is as follows. One of the primary rRNA binding proteins, it binds directly near the 3'-end of the 23S rRNA, where it nucleates assembly of the 50S subunit. The polypeptide is Large ribosomal subunit protein uL3 (Leptospira interrogans serogroup Icterohaemorrhagiae serovar copenhageni (strain Fiocruz L1-130)).